We begin with the raw amino-acid sequence, 388 residues long: UDP-N-acetylglucosamine--N-acetylmuramyl-(pentapeptide) pyrophosphoryl-undecaprenol N-acetylglucosamine transferase (388 aa).

Residues 42-44, N159, R195, S223, I277, and Q322 each bind UDP-N-acetyl-alpha-D-glucosamine; that span reads TGG.

It belongs to the glycosyltransferase 28 family. MurG subfamily.

The protein resides in the cell inner membrane. It catalyses the reaction di-trans,octa-cis-undecaprenyl diphospho-N-acetyl-alpha-D-muramoyl-L-alanyl-D-glutamyl-meso-2,6-diaminopimeloyl-D-alanyl-D-alanine + UDP-N-acetyl-alpha-D-glucosamine = di-trans,octa-cis-undecaprenyl diphospho-[N-acetyl-alpha-D-glucosaminyl-(1-&gt;4)]-N-acetyl-alpha-D-muramoyl-L-alanyl-D-glutamyl-meso-2,6-diaminopimeloyl-D-alanyl-D-alanine + UDP + H(+). Its pathway is cell wall biogenesis; peptidoglycan biosynthesis. Functionally, cell wall formation. Catalyzes the transfer of a GlcNAc subunit on undecaprenyl-pyrophosphoryl-MurNAc-pentapeptide (lipid intermediate I) to form undecaprenyl-pyrophosphoryl-MurNAc-(pentapeptide)GlcNAc (lipid intermediate II). The chain is UDP-N-acetylglucosamine--N-acetylmuramyl-(pentapeptide) pyrophosphoryl-undecaprenol N-acetylglucosamine transferase from Albidiferax ferrireducens (strain ATCC BAA-621 / DSM 15236 / T118) (Rhodoferax ferrireducens).